A 318-amino-acid chain; its full sequence is Ribosomal RNA small subunit methyltransferase H (318 aa).

Residues 34–36 (GGH), D53, F82, D103, and Q110 each bind S-adenosyl-L-methionine.

This sequence belongs to the methyltransferase superfamily. RsmH family.

The protein localises to the cytoplasm. It catalyses the reaction cytidine(1402) in 16S rRNA + S-adenosyl-L-methionine = N(4)-methylcytidine(1402) in 16S rRNA + S-adenosyl-L-homocysteine + H(+). Its function is as follows. Specifically methylates the N4 position of cytidine in position 1402 (C1402) of 16S rRNA. The protein is Ribosomal RNA small subunit methyltransferase H of Limosilactobacillus reuteri (strain DSM 20016) (Lactobacillus reuteri).